The following is a 118-amino-acid chain: Mitochondrial protein YPR099C (118 aa).

Its subcellular location is the mitochondrion. Its function is as follows. Essential for the functional mitochondria and respiratory growth. The sequence is that of Mitochondrial protein YPR099C from Saccharomyces cerevisiae (strain ATCC 204508 / S288c) (Baker's yeast).